Consider the following 271-residue polypeptide: DNA repair protein RecO (271 aa).

The span at 249 to 264 (VRVEDSVRQDGDRDST) shows a compositional bias: basic and acidic residues. The disordered stretch occupies residues 249 to 271 (VRVEDSVRQDGDRDSTTRTSSPA).

The protein belongs to the RecO family.

Functionally, involved in DNA repair and RecF pathway recombination. The sequence is that of DNA repair protein RecO from Rhodococcus jostii (strain RHA1).